Consider the following 211-residue polypeptide: tRNA (guanine-N(7)-)-methyltransferase (211 aa).

S-adenosyl-L-methionine is bound by residues Glu44, Asp69, Asp96, and Asp118. Asp118 is a catalytic residue. Lys122 is a substrate binding site. Positions Arg124–Arg129 are interaction with RNA. Substrate contacts are provided by residues Asp154 and Thr191–Glu194.

This sequence belongs to the class I-like SAM-binding methyltransferase superfamily. TrmB family.

The catalysed reaction is guanosine(46) in tRNA + S-adenosyl-L-methionine = N(7)-methylguanosine(46) in tRNA + S-adenosyl-L-homocysteine. It functions in the pathway tRNA modification; N(7)-methylguanine-tRNA biosynthesis. Its function is as follows. Catalyzes the formation of N(7)-methylguanine at position 46 (m7G46) in tRNA. This Streptococcus equi subsp. equi (strain 4047) protein is tRNA (guanine-N(7)-)-methyltransferase.